We begin with the raw amino-acid sequence, 349 residues long: N-acetyltaurine hydrolase (349 aa).

A divalent metal cation-binding residues include H26, H28, E169, H201, H230, and D298.

This sequence belongs to the metallo-dependent hydrolases superfamily. Phosphotriesterase family. The cofactor is a divalent metal cation.

The protein resides in the cytoplasm. It localises to the cytosol. The enzyme catalyses N-acetyltaurine + H2O = taurine + acetate. It carries out the reaction N-propanoyltaurine + H2O = propanoate + taurine. It catalyses the reaction N-acetyl-L-methionine + H2O = L-methionine + acetate. The catalysed reaction is N-acetyl-L-isoleucine + H2O = L-isoleucine + acetate. The enzyme catalyses N-acetyl-L-leucine + H2O = L-leucine + acetate. It carries out the reaction N-acetyl-L-valine + H2O = L-valine + acetate. In terms of biological role, N-acetyltaurine hydrolase that regulates feeding by catalyzing the hydrolysis of N-acetyltaurine into taurine and acetate. N-acetyltaurine has anorexigenic and anti-obesity effects that are dependent on GFRAL receptor and GDF15. PTER also acts on other N-acetyl amino acids (Met, Ile, Leu, Val) and N-propionyltaurine, but at lower rates. The polypeptide is N-acetyltaurine hydrolase (PTER) (Bos taurus (Bovine)).